Reading from the N-terminus, the 362-residue chain is Lipoprotein p35 (362 aa).

Positions 1-30 (MKIKKIKLLKALALTGAFGIVATVPVIVSS) are cleaved as a signal peptide. Cys-31 is lipidated: N-palmitoyl cysteine. Cys-31 is lipidated: S-diacylglycerol cysteine. A disordered region spans residues 33 to 53 (STSENNGNGNGNGGTDGNTQQ).

This sequence belongs to the p35 lipoprotein family. Post-translationally, the N-terminus is blocked.

It is found in the cell membrane. Its function is as follows. Major M.penetrans antigen. The polypeptide is Lipoprotein p35 (Malacoplasma penetrans (strain HF-2) (Mycoplasma penetrans)).